We begin with the raw amino-acid sequence, 339 residues long: 2,3,4,5-tetrahydropyridine-2,6-dicarboxylate N-succinyltransferase (339 aa).

D180 contacts Mg(2+). Catalysis depends on E213, which acts as the Acyl-anhydride intermediate. Succinyl-CoA is bound by residues R215, G230, S233, A256, 271–272, G279, and K300; that span reads EA.

The protein belongs to the type 2 tetrahydrodipicolinate N-succinyltransferase family. In terms of assembly, homotrimer.

It is found in the cytoplasm. It carries out the reaction (S)-2,3,4,5-tetrahydrodipicolinate + succinyl-CoA + H2O = (S)-2-succinylamino-6-oxoheptanedioate + CoA. It participates in amino-acid biosynthesis; L-lysine biosynthesis via DAP pathway; LL-2,6-diaminopimelate from (S)-tetrahydrodipicolinate (succinylase route): step 1/3. Catalyzes the conversion of the cyclic tetrahydrodipicolinate (THDP) into the acyclic N-succinyl-L-2-amino-6-oxopimelate using succinyl-CoA. This Bifidobacterium longum (strain NCC 2705) protein is 2,3,4,5-tetrahydropyridine-2,6-dicarboxylate N-succinyltransferase.